The chain runs to 28 residues: Cruzioseptin-4 (28 aa).

Glu25 carries the glutamic acid 1-amide modification. Positions Glu27–His28 are excised as a propeptide.

Expressed by the skin glands.

The protein localises to the secreted. In terms of biological role, has antimicrobial activity. The sequence is that of Cruzioseptin-4 from Cruziohyla calcarifer (Splendid leaf frog).